The chain runs to 310 residues: MVDGEDKIKLIIIVGPTASGKTELAVRLAERFDGEIVNADSMQVYRGMDIGTAKPSPQLRQRVPHHLVDIVTPDVNFSAADFRREAAAAIDDIHSRGKSVFVVGGTGLYIRALLQGLVDSPSGDESIRRELVELAQTVGNEELLRRLALVDPETAERLHPNDRLRIIRALEVYRQTGRPISTFRSEHGFADTYYDCLKIGLRVERQELYRRVESRVEVMIEQGLIAEVEGLLRAGYTPDLKSMRSIGYKEICAYLAGECTLDEAVQLIKRDTRHYAKRQMTWFNKDFEINWVEYPESFATICNHVIEFFA.

15-22 (GPTASGKT) provides a ligand contact to ATP. Position 17–22 (17–22 (TASGKT)) interacts with substrate. The interval 40 to 43 (DSMQ) is interaction with substrate tRNA.

Belongs to the IPP transferase family. As to quaternary structure, monomer. The cofactor is Mg(2+).

It catalyses the reaction adenosine(37) in tRNA + dimethylallyl diphosphate = N(6)-dimethylallyladenosine(37) in tRNA + diphosphate. In terms of biological role, catalyzes the transfer of a dimethylallyl group onto the adenine at position 37 in tRNAs that read codons beginning with uridine, leading to the formation of N6-(dimethylallyl)adenosine (i(6)A). This Geotalea uraniireducens (strain Rf4) (Geobacter uraniireducens) protein is tRNA dimethylallyltransferase 2.